The chain runs to 536 residues: Phosphoenolpyruvate carboxykinase (ATP) (536 aa).

Residues arginine 61, tyrosine 195, and lysine 201 each contribute to the substrate site. Residues lysine 201, histidine 220, and 236–244 each bind ATP; that span reads GLSGTGKTT. The Mn(2+) site is built by lysine 201 and histidine 220. Residue aspartate 257 participates in Mn(2+) binding. The ATP site is built by glutamate 285, arginine 322, and threonine 447. Arginine 322 is a binding site for substrate.

It belongs to the phosphoenolpyruvate carboxykinase (ATP) family. Mn(2+) is required as a cofactor.

Its subcellular location is the cytoplasm. The enzyme catalyses oxaloacetate + ATP = phosphoenolpyruvate + ADP + CO2. It functions in the pathway carbohydrate biosynthesis; gluconeogenesis. In terms of biological role, involved in the gluconeogenesis. Catalyzes the conversion of oxaloacetate (OAA) to phosphoenolpyruvate (PEP) through direct phosphoryl transfer between the nucleoside triphosphate and OAA. This is Phosphoenolpyruvate carboxykinase (ATP) from Rhizobium etli (strain ATCC 51251 / DSM 11541 / JCM 21823 / NBRC 15573 / CFN 42).